Reading from the N-terminus, the 63-residue chain is Large ribosomal subunit protein bL28 (63 aa).

It belongs to the bacterial ribosomal protein bL28 family.

This chain is Large ribosomal subunit protein bL28, found in Kosmotoga olearia (strain ATCC BAA-1733 / DSM 21960 / TBF 19.5.1).